Consider the following 499-residue polypeptide: Glycerol kinase (499 aa).

Thr12 lines the ADP pocket. Residues Thr12, Thr13, and Ser14 each contribute to the ATP site. Thr12 is a binding site for sn-glycerol 3-phosphate. Arg16 contacts ADP. Sn-glycerol 3-phosphate-binding residues include Arg82, Glu83, and Tyr134. 3 residues coordinate glycerol: Arg82, Glu83, and Tyr134. His230 carries the post-translational modification Phosphohistidine; by HPr. A sn-glycerol 3-phosphate-binding site is contributed by Asp244. The glycerol site is built by Asp244 and Gln245. ADP-binding residues include Thr266 and Gly309. ATP-binding residues include Thr266, Gly309, Gln313, and Gly410. Gly410 and Asn414 together coordinate ADP.

This sequence belongs to the FGGY kinase family. In terms of assembly, homotetramer and homodimer (in equilibrium). In terms of processing, the phosphoenolpyruvate-dependent sugar phosphotransferase system (PTS), including enzyme I, and histidine-containing protein (HPr) are required for the phosphorylation, which leads to the activation of the enzyme.

The enzyme catalyses glycerol + ATP = sn-glycerol 3-phosphate + ADP + H(+). The protein operates within polyol metabolism; glycerol degradation via glycerol kinase pathway; sn-glycerol 3-phosphate from glycerol: step 1/1. With respect to regulation, activated by phosphorylation and inhibited by fructose 1,6-bisphosphate (FBP). In terms of biological role, key enzyme in the regulation of glycerol uptake and metabolism. Catalyzes the phosphorylation of glycerol to yield sn-glycerol 3-phosphate. This is Glycerol kinase from Staphylococcus epidermidis (strain ATCC 12228 / FDA PCI 1200).